The chain runs to 551 residues: Glucose-6-phosphate isomerase 2 (551 aa).

Glu-359 serves as the catalytic Proton donor. Active-site residues include His-390 and Lys-514.

This sequence belongs to the GPI family.

The protein localises to the cytoplasm. It carries out the reaction alpha-D-glucose 6-phosphate = beta-D-fructose 6-phosphate. The protein operates within carbohydrate biosynthesis; gluconeogenesis. It functions in the pathway carbohydrate degradation; glycolysis; D-glyceraldehyde 3-phosphate and glycerone phosphate from D-glucose: step 2/4. Functionally, catalyzes the reversible isomerization of glucose-6-phosphate to fructose-6-phosphate. The sequence is that of Glucose-6-phosphate isomerase 2 from Streptomyces coelicolor (strain ATCC BAA-471 / A3(2) / M145).